The primary structure comprises 234 residues: Interleukin-34 (234 aa).

The first 20 residues, 1 to 20, serve as a signal peptide directing secretion; it reads MPQGLAWLRYLGILLGMALG. Asn-76 carries N-linked (GlcNAc...) asparagine glycosylation. Residues 191-234 are disordered; that stretch reads EAPQPQPRSPASAQCEAAQLYPLPQPPSTSLPRVLGPSAGPPTQ.

Belongs to the IL-34 family. In terms of assembly, homodimer. Interacts with CSF1R.

The protein resides in the secreted. Its function is as follows. Cytokine that promotes the proliferation, survival and differentiation of monocytes and macrophages. Promotes the release of pro-inflammatory chemokines, and thereby plays an important role in innate immunity and in inflammatory processes. Plays an important role in the regulation of osteoclast proliferation and differentiation, and in the regulation of bone resorption. Signaling via CSF1R and its downstream effectors stimulates phosphorylation of MAPK1/ERK2 AND MAPK3/ERK1. This Bos taurus (Bovine) protein is Interleukin-34.